Consider the following 199-residue polypeptide: Large ribosomal subunit protein uL5 (199 aa).

This sequence belongs to the universal ribosomal protein uL5 family. As to quaternary structure, part of the 50S ribosomal subunit; part of the 5S rRNA/L5/L18/L25 subcomplex. Contacts the 5S rRNA and the P site tRNA. Forms a bridge to the 30S subunit in the 70S ribosome.

Its function is as follows. This is one of the proteins that bind and probably mediate the attachment of the 5S RNA into the large ribosomal subunit, where it forms part of the central protuberance. In the 70S ribosome it contacts protein S13 of the 30S subunit (bridge B1b), connecting the 2 subunits; this bridge is implicated in subunit movement. Contacts the P site tRNA; the 5S rRNA and some of its associated proteins might help stabilize positioning of ribosome-bound tRNAs. This chain is Large ribosomal subunit protein uL5, found in Frankia casuarinae (strain DSM 45818 / CECT 9043 / HFP020203 / CcI3).